Reading from the N-terminus, the 507-residue chain is Bifunctional purine biosynthesis protein PurH (507 aa).

Residues 1–144 (MKRALLSVSD…KNSDSVWAVV (144 aa)) form the MGS-like domain.

This sequence belongs to the PurH family.

The enzyme catalyses (6R)-10-formyltetrahydrofolate + 5-amino-1-(5-phospho-beta-D-ribosyl)imidazole-4-carboxamide = 5-formamido-1-(5-phospho-D-ribosyl)imidazole-4-carboxamide + (6S)-5,6,7,8-tetrahydrofolate. The catalysed reaction is IMP + H2O = 5-formamido-1-(5-phospho-D-ribosyl)imidazole-4-carboxamide. It participates in purine metabolism; IMP biosynthesis via de novo pathway; 5-formamido-1-(5-phospho-D-ribosyl)imidazole-4-carboxamide from 5-amino-1-(5-phospho-D-ribosyl)imidazole-4-carboxamide (10-formyl THF route): step 1/1. Its pathway is purine metabolism; IMP biosynthesis via de novo pathway; IMP from 5-formamido-1-(5-phospho-D-ribosyl)imidazole-4-carboxamide: step 1/1. In Lacticaseibacillus paracasei (strain ATCC 334 / BCRC 17002 / CCUG 31169 / CIP 107868 / KCTC 3260 / NRRL B-441) (Lactobacillus paracasei), this protein is Bifunctional purine biosynthesis protein PurH.